Reading from the N-terminus, the 103-residue chain is Large ribosomal subunit protein uL24 (103 aa).

The protein belongs to the universal ribosomal protein uL24 family. As to quaternary structure, part of the 50S ribosomal subunit.

One of two assembly initiator proteins, it binds directly to the 5'-end of the 23S rRNA, where it nucleates assembly of the 50S subunit. Functionally, one of the proteins that surrounds the polypeptide exit tunnel on the outside of the subunit. This is Large ribosomal subunit protein uL24 from Endomicrobium trichonymphae.